The primary structure comprises 326 residues: 3-methyl-2-oxobutanoate hydroxymethyltransferase 1 (326 aa).

Mg(2+) is bound by residues D52, D91, and E122. 3-methyl-2-oxobutanoate-binding positions include 52–53 (DS) and D91. The Proton acceptor role is filled by E189.

This sequence belongs to the PanB family. As to quaternary structure, homodecamer; pentamer of dimers. The cofactor is Mg(2+).

The protein resides in the cytoplasm. The catalysed reaction is 3-methyl-2-oxobutanoate + (6R)-5,10-methylene-5,6,7,8-tetrahydrofolate + H2O = 2-dehydropantoate + (6S)-5,6,7,8-tetrahydrofolate. It functions in the pathway cofactor biosynthesis; (R)-pantothenate biosynthesis; (R)-pantoate from 3-methyl-2-oxobutanoate: step 1/2. Catalyzes the reversible reaction in which hydroxymethyl group from 5,10-methylenetetrahydrofolate is transferred onto alpha-ketoisovalerate to form ketopantoate. The chain is 3-methyl-2-oxobutanoate hydroxymethyltransferase 1 from Bradyrhizobium diazoefficiens (strain JCM 10833 / BCRC 13528 / IAM 13628 / NBRC 14792 / USDA 110).